Consider the following 238-residue polypeptide: Probable tetraspanin tspC (238 aa).

Residues M1 to K16 lie on the Cytoplasmic side of the membrane. The chain crosses the membrane as a helical span at residues V17 to G37. Over S38–T69 the chain is Extracellular. Residue N62 is glycosylated (N-linked (GlcNAc...) asparagine). Residues G70–Y90 form a helical membrane-spanning segment. Residues K91–K93 are Cytoplasmic-facing. Residues L94 to I114 form a helical membrane-spanning segment. The Extracellular portion of the chain corresponds to G115–K197. Residues N143 and N164 are each glycosylated (N-linked (GlcNAc...) asparagine). Residues L198–L218 traverse the membrane as a helical segment. Residues S219 to Y238 are Cytoplasmic-facing.

This sequence belongs to the tetraspanin (TM4SF) family.

Its subcellular location is the membrane. This Dictyostelium discoideum (Social amoeba) protein is Probable tetraspanin tspC (tspC).